The primary structure comprises 268 residues: LOB domain-containing protein 13 (268 aa).

The LOB domain maps to 51 to 152 (TPCAACKLLR…SELTTVRTEI (102 aa)). A disordered region spans residues 191–268 (LLPPPPPPPP…SSDNNVHYFD (78 aa)). Pro residues-rich tracts occupy residues 192–205 (LPPPPPPPPTPRPP) and 212–222 (PAPPPTPPVSL). A compositionally biased stretch (low complexity) spans 223 to 243 (PSPSMVVSSSSSSNSSATNSM). A compositionally biased stretch (polar residues) spans 250–268 (STAGYSNSLSSDNNVHYFD).

Belongs to the LOB domain-containing protein family. In terms of tissue distribution, expressed in shoots and roots and at low levels in flowers, but not in leaves or inflorescence stems.

The polypeptide is LOB domain-containing protein 13 (LBD13) (Arabidopsis thaliana (Mouse-ear cress)).